The sequence spans 721 residues: Polyribonucleotide nucleotidyltransferase (721 aa).

Residues Asp490 and Asp496 each contribute to the Mg(2+) site. The KH domain occupies 557–623 (PRIISIKINP…RIAGLTKEAK (67 aa)). Residues 625 to 693 (GEEYEGTVVK…DRGKIDLIRP (69 aa)) enclose the S1 motif domain. The segment at 693-721 (PELEGKIAPREPRAPRGGGDRGPRPPRRD) is disordered.

Belongs to the polyribonucleotide nucleotidyltransferase family. Requires Mg(2+) as cofactor.

It is found in the cytoplasm. It catalyses the reaction RNA(n+1) + phosphate = RNA(n) + a ribonucleoside 5'-diphosphate. In terms of biological role, involved in mRNA degradation. Catalyzes the phosphorolysis of single-stranded polyribonucleotides processively in the 3'- to 5'-direction. This Deinococcus deserti (strain DSM 17065 / CIP 109153 / LMG 22923 / VCD115) protein is Polyribonucleotide nucleotidyltransferase.